The chain runs to 286 residues: Quinone oxidoreductase 2 (286 aa).

NADP(+) contacts are provided by residues 6-11, arginine 33, 73-75, 138-143, and arginine 171; these read GATGQL, SSS, and GWYSEN.

Belongs to the NmrA-type oxidoreductase family. As to quaternary structure, monomer.

The catalysed reaction is a quinone + NADH + H(+) = a quinol + NAD(+). It catalyses the reaction a quinone + NADPH + H(+) = a quinol + NADP(+). Its function is as follows. Quinone oxidoreductase that may play some additional role beyond quinone reduction. Potential redox sensor protein. Overexpression induces retardation of growth. The polypeptide is Quinone oxidoreductase 2 (qorB) (Escherichia coli (strain K12)).